A 185-amino-acid chain; its full sequence is Elongation factor P (185 aa).

This sequence belongs to the elongation factor P family.

The protein localises to the cytoplasm. Its pathway is protein biosynthesis; polypeptide chain elongation. Its function is as follows. Involved in peptide bond synthesis. Stimulates efficient translation and peptide-bond synthesis on native or reconstituted 70S ribosomes in vitro. Probably functions indirectly by altering the affinity of the ribosome for aminoacyl-tRNA, thus increasing their reactivity as acceptors for peptidyl transferase. The sequence is that of Elongation factor P from Caldanaerobacter subterraneus subsp. tengcongensis (strain DSM 15242 / JCM 11007 / NBRC 100824 / MB4) (Thermoanaerobacter tengcongensis).